The chain runs to 525 residues: MSEYLQQIAKRRTFAIISHPDAGKTTITEKMLLFGNAIKTAGTVKAKKSGIHATSDWMEMEKQRGISITTSVMQFPYNGRIINLLDTPGHEDFSEDTYRTLTAVDSALMVVDAVKGVEDRTIKLMNVCRLRDTPIVTFMNKFDRDTRDPLELLDEVENILKIKCAPMNWPIGMGKYFKGVYDLYNDEVTLFETGHGHEIYPYKKIKGLANAKDAIGIDLYEDLEMEIDLVRGASHEFDEQEFLEGNLTPVYFGTALSNFGVKEMMDGFTRYAPAPQHREADQRVVAADEQKLTGFVFKIQANMDEKHRNRIAFFRICSGKYEKGMKIFHERTGKQMQISKALTFMAGEREQVEEGYAGDIIGLHNHGSIQIGDSFTQGEKLKFKGIPNFAPEIFKRVKLNDPLKMKALQKGLVQLSEEGATQVFKPFISNDLVLGAVGVLQFDVVAQRLASEYNVKCSYEGVNVTLARWIFCNDEKKLNDFKKKYEVNLAYDGAGYLTYLAPTGVNLQLAQEKNPDIIFSATREH.

Residues 9–276 enclose the tr-type G domain; that stretch reads AKRRTFAIIS…GFTRYAPAPQ (268 aa). Residues 18-25, 86-90, and 140-143 contribute to the GTP site; these read SHPDAGKT, DTPGH, and NKFD.

The protein belongs to the TRAFAC class translation factor GTPase superfamily. Classic translation factor GTPase family. PrfC subfamily.

It is found in the cytoplasm. Increases the formation of ribosomal termination complexes and stimulates activities of RF-1 and RF-2. It binds guanine nucleotides and has strong preference for UGA stop codons. It may interact directly with the ribosome. The stimulation of RF-1 and RF-2 is significantly reduced by GTP and GDP, but not by GMP. The protein is Peptide chain release factor 3 of Francisella tularensis subsp. tularensis (strain WY96-3418).